Consider the following 118-residue polypeptide: V-type proton ATPase subunit G 3 (118 aa).

The tract at residues 1 to 34 (MTSQSQGIHQLLQAEKRAKDKLEEAKKRKGKRLK) is disordered. Residues 5 to 54 (SQGIHQLLQAEKRAKDKLEEAKKRKGKRLKQAKEEAMVEIDQYRMQRDKE) are a coiled coil. Residues 14–26 (AEKRAKDKLEEAK) are compositionally biased toward basic and acidic residues.

Belongs to the V-ATPase G subunit family. As to quaternary structure, V-ATPase is a heteromultimeric enzyme made up of two complexes: the ATP-hydrolytic V1 complex and the proton translocation V0 complex. The V1 complex consists of three catalytic AB heterodimers that form a heterohexamer, three peripheral stalks each consisting of EG heterodimers, one central rotor including subunits D and F, and the regulatory subunits C and H. The proton translocation complex V0 consists of the proton transport subunit a, a ring of proteolipid subunits c9c'', rotary subunit d, subunits e and f, and the accessory subunits ATP6AP1/Ac45 and ATP6AP2/PRR. Kidney.

In terms of biological role, subunit of the V1 complex of vacuolar(H+)-ATPase (V-ATPase), a multisubunit enzyme composed of a peripheral complex (V1) that hydrolyzes ATP and a membrane integral complex (V0) that translocates protons. V-ATPase is responsible for acidifying and maintaining the pH of intracellular compartments and in some cell types, is targeted to the plasma membrane, where it is responsible for acidifying the extracellular environment. The protein is V-type proton ATPase subunit G 3 (ATP6V1G3) of Homo sapiens (Human).